We begin with the raw amino-acid sequence, 270 residues long: MSNSRENSVYLAKLAEQAERYEEMVENMKKVACSNDKLSVEERNLLSVAYKNIIGARRASWRIISSIEQKEESRGNTRQAALIKEYRKKIEDELSDICHDVLSVLEKHLIPAATTGESKVFYYKMKGDYYRYLAEFTVGEVCKEAADSSLEAYKAASDIAVAELPPTDPMRLGLALNFSVFYYEILDSPESACHLAKQVFDEAISELDSLSEESYKDSTLIMQLLRDNLTLWTSDAEYNQSAKEEAPAAAAASENEHPEPKESTTDTVKA.

Phosphoserine occurs at positions 234 and 253. The interval 240–270 (QSAKEEAPAAAAASENEHPEPKESTTDTVKA) is disordered. Positions 254–270 (ENEHPEPKESTTDTVKA) are enriched in basic and acidic residues.

Belongs to the 14-3-3 family. Interacts with rad24. Interacts with byr2.

The protein resides in the cytoplasm. Functionally, acts in cell cycle and stress checkpoint signaling by sequestering signal transducers regulated by the checkpoints. Required for the DNA damage checkpoint that ensures that DNA damage is repaired before mitosis is attempted. Sequesters byr2 in the cytoplasm to prevent its translocation to the plasma membrane. This is Checkpoint signal transducer rad25 from Schizosaccharomyces pombe (strain 972 / ATCC 24843) (Fission yeast).